Consider the following 504-residue polypeptide: Maturase K (504 aa).

Belongs to the intron maturase 2 family. MatK subfamily.

It is found in the plastid. It localises to the chloroplast. Functionally, usually encoded in the trnK tRNA gene intron. Probably assists in splicing its own and other chloroplast group II introns. The sequence is that of Maturase K from Gossypium turneri (Cotton).